The sequence spans 289 residues: Formamidopyrimidine-DNA glycosylase (289 aa).

The active-site Schiff-base intermediate with DNA is Pro-2. The active-site Proton donor is Glu-3. The active-site Proton donor; for beta-elimination activity is the Lys-60. Positions 94, 126, and 167 each coordinate DNA. The segment at 252 to 287 adopts an FPG-type zinc-finger fold; the sequence is QVYGKPAGTPCPRCGTGLARIRIAGRSSVFCPRCQP. Arg-277 acts as the Proton donor; for delta-elimination activity in catalysis.

It belongs to the FPG family. As to quaternary structure, monomer. It depends on Zn(2+) as a cofactor.

The catalysed reaction is Hydrolysis of DNA containing ring-opened 7-methylguanine residues, releasing 2,6-diamino-4-hydroxy-5-(N-methyl)formamidopyrimidine.. The enzyme catalyses 2'-deoxyribonucleotide-(2'-deoxyribose 5'-phosphate)-2'-deoxyribonucleotide-DNA = a 3'-end 2'-deoxyribonucleotide-(2,3-dehydro-2,3-deoxyribose 5'-phosphate)-DNA + a 5'-end 5'-phospho-2'-deoxyribonucleoside-DNA + H(+). Its function is as follows. Involved in base excision repair of DNA damaged by oxidation or by mutagenic agents. Acts as a DNA glycosylase that recognizes and removes damaged bases. Has a preference for oxidized purines, such as 7,8-dihydro-8-oxoguanine (8-oxoG). Has AP (apurinic/apyrimidinic) lyase activity and introduces nicks in the DNA strand. Cleaves the DNA backbone by beta-delta elimination to generate a single-strand break at the site of the removed base with both 3'- and 5'-phosphates. The chain is Formamidopyrimidine-DNA glycosylase from Thermomicrobium roseum (strain ATCC 27502 / DSM 5159 / P-2).